The sequence spans 455 residues: EP1-like glycoprotein 1 (455 aa).

Positions 1 to 22 are cleaved as a signal peptide; sequence MLRFDYLLITALAISTVSVVMA. The region spanning 43–163 is the Bulb-type lectin domain; it reads TEYDASYRFL…HGKFVWQSFD (121 aa). N-linked (GlcNAc...) asparagine glycans are attached at residues Asn106, Asn191, Asn211, Asn241, and Asn289. Cys374 is subject to S-nitrosocysteine. Positions 374–455 constitute a PAN domain; the sequence is CSGGKGKAVN…NTSSVAYIKY (82 aa). 2 disulfides stabilise this stretch: Cys410–Cys432 and Cys414–Cys420. N-linked (GlcNAc...) asparagine glycosylation occurs at Asn446.

It localises to the secreted. Its subcellular location is the cell wall. This chain is EP1-like glycoprotein 1, found in Arabidopsis thaliana (Mouse-ear cress).